The sequence spans 403 residues: Acetate kinase (403 aa).

Asn-7 lines the Mg(2+) pocket. Lys-14 contributes to the ATP binding site. Residue Arg-90 participates in substrate binding. Asp-147 functions as the Proton donor/acceptor in the catalytic mechanism. Residues 207–211 (HIGNG), 283–285 (DMR), and 331–335 (GVGEN) contribute to the ATP site. Glu-386 is a Mg(2+) binding site.

Belongs to the acetokinase family. Homodimer. It depends on Mg(2+) as a cofactor. Requires Mn(2+) as cofactor.

It localises to the cytoplasm. The enzyme catalyses acetate + ATP = acetyl phosphate + ADP. Its pathway is metabolic intermediate biosynthesis; acetyl-CoA biosynthesis; acetyl-CoA from acetate: step 1/2. In terms of biological role, catalyzes the formation of acetyl phosphate from acetate and ATP. Can also catalyze the reverse reaction. Phosphorylates propionate (54%) in addition to acetate (100%). Uses GTP (100%), ITP (163%), UTP (56%), and CTP (21%) as phosphoryl donors in addition to ATP (100%). This chain is Acetate kinase, found in Thermotoga maritima (strain ATCC 43589 / DSM 3109 / JCM 10099 / NBRC 100826 / MSB8).